The primary structure comprises 355 residues: C-C chemokine receptor type 3 (355 aa).

Over 1 to 34 (MTTSLDTVETFGPTSYDDDMGLLCEKADVGALIA) the chain is Extracellular. Residues 35–62 (QFVPPLYSLVFMVGLLGNVVVVMILIKY) form a helical membrane-spanning segment. Over 63–72 (RRLRIMTNIY) the chain is Cytoplasmic. Residues 73–93 (LLNLAISDLLFLFTLPFWIHY) traverse the membrane as a helical segment. The Extracellular portion of the chain corresponds to 94–107 (VRERNWVFSHGMCK). Residues Cys-106 and Cys-183 are joined by a disulfide bond. The chain crosses the membrane as a helical span at residues 108-129 (VLSGFYHTGLYSEIFFIILLTI). At 130–146 (DRYLAIVHAVFALRART) the chain is on the cytoplasmic side. Residues 147-171 (VTFGVVTSIVTWGLAVLAALPEFIF) traverse the membrane as a helical segment. Topologically, residues 172-203 (YGTEELFPETLCSAIYPQDTVYSWRHFHTLRM) are extracellular. The chain crosses the membrane as a helical span at residues 204–223 (TILCLALPLLVMAICYTGII). Over 224–239 (KTLLRCPSKKKYKAIR) the chain is Cytoplasmic. Residues 240-264 (LIFVIMAVFFIFWTPYNVAILISTY) traverse the membrane as a helical segment. Over 265–281 (QSILFGPDCERSKHLDL) the chain is Extracellular. The helical transmembrane segment at 282–305 (FVLVTEVIAYSHCWVNPVIYAFVG) threads the bilayer. Residues 306 to 355 (ERFRKYLRHFFHRHVLMHPGKYIPFLPSEKLERTSSVSPSTAEPELSIVF) are Cytoplasmic-facing.

Belongs to the G-protein coupled receptor 1 family.

It is found in the cell membrane. Functionally, receptor for C-C type chemokine. Binds and responds to a variety of chemokines, including CCL11, CCL26, CCL7, CCL13, RANTES(CCL5) and CCL15. Subsequently transduces a signal by increasing the intracellular calcium ions level. In addition acts as a possible functional receptor for NARS1. This Macaca fascicularis (Crab-eating macaque) protein is C-C chemokine receptor type 3 (CCR3).